Here is a 317-residue protein sequence, read N- to C-terminus: tRNA dimethylallyltransferase (317 aa).

14 to 21 (GPTAVGKT) contributes to the ATP binding site. 16–21 (TAVGKT) is a substrate binding site. The interaction with substrate tRNA stretch occupies residues 39–42 (DSMQ).

The protein belongs to the IPP transferase family. In terms of assembly, monomer. The cofactor is Mg(2+).

It carries out the reaction adenosine(37) in tRNA + dimethylallyl diphosphate = N(6)-dimethylallyladenosine(37) in tRNA + diphosphate. Its function is as follows. Catalyzes the transfer of a dimethylallyl group onto the adenine at position 37 in tRNAs that read codons beginning with uridine, leading to the formation of N6-(dimethylallyl)adenosine (i(6)A). The protein is tRNA dimethylallyltransferase of Bacillus cereus (strain ATCC 10987 / NRS 248).